A 494-amino-acid polypeptide reads, in one-letter code: 4-hydroxyphenylacetate 3-monooxygenase oxygenase component (494 aa).

Substrate-binding positions include 103 to 107 (RSPDY) and His149. Residues 149–151 (HTL), 155–158 (QMNR), and Thr192 each bind FAD. 205-206 (ST) contributes to the substrate binding site. 455-458 (DPVR) lines the FAD pocket.

Belongs to the FADH(2)-utilizing monooxygenase family. 4-HPA 3-monooxygenase consists of a reductase component HpaI and an oxygenase component HpaH.

The catalysed reaction is 4-hydroxyphenylacetate + FADH2 + O2 = 3,4-dihydroxyphenylacetate + FAD + H2O + H(+). It functions in the pathway aromatic compound metabolism; 4-hydroxyphenylacetate degradation; pyruvate and succinate semialdehyde from 4-hydroxyphenylacetate: step 1/7. Functionally, utilizes FADH(2) supplied by HpaI, to catalyze the hydroxylation of 4-hydroxyphenylacetic acid, leading to the production of 3,4-dihydroxyphenylacetic acid (DHPA). This chain is 4-hydroxyphenylacetate 3-monooxygenase oxygenase component (hpaH), found in Geobacillus sp. (strain PA-9).